We begin with the raw amino-acid sequence, 242 residues long: Required for respiratory growth protein 7, mitochondrial (242 aa).

Belongs to the RRG7 family.

It localises to the mitochondrion. This is Required for respiratory growth protein 7, mitochondrial (RRG7) from Saccharomyces cerevisiae (strain ATCC 204508 / S288c) (Baker's yeast).